Consider the following 415-residue polypeptide: MNEVLAKGKRAKEVAMNLVLKSTSQKNEALAAIAERLIVETAYILEENKRGIEEGKAKGFSDSLLDRLMLTEQRIVDMTEGIKQLIELRDPVGECVSAWERPNGLSIQEMRVPLGVVGMIYEARPNVTVDAATICLKTGNAVILRGSSSAIHSNKAIVAVIHRALKQTSLPQESVQLIEDTTRDSAKQLFTMNDYLDVLIPRGGKQLIDTVVREASVPVLETGAGNCHVFIDETADKQMAFDIIINAKTQRPSVCNAIETIVLHEKWAEQYGSELFSSLKKRGVELRGDQKALAMDSSIVLASEEDWWTEFLSLTLAVKLVSSIEEAIHHINTYGSMHSEAIISENEENVSKFFVSVDAAALYHNASTRFTDGSEFGFGAEIGISTQKLHVRGPMGLPALTSTKYVIRGNGQIRK.

The protein belongs to the gamma-glutamyl phosphate reductase family.

Its subcellular location is the cytoplasm. It catalyses the reaction L-glutamate 5-semialdehyde + phosphate + NADP(+) = L-glutamyl 5-phosphate + NADPH + H(+). The protein operates within amino-acid biosynthesis; L-proline biosynthesis; L-glutamate 5-semialdehyde from L-glutamate: step 2/2. Catalyzes the NADPH-dependent reduction of L-glutamate 5-phosphate into L-glutamate 5-semialdehyde and phosphate. The product spontaneously undergoes cyclization to form 1-pyrroline-5-carboxylate. This chain is Gamma-glutamyl phosphate reductase, found in Bacillus cereus (strain 03BB102).